A 361-amino-acid chain; its full sequence is MVSLIKSIKAHSDKAWSVSAHKTVPLLATASTDKTSKIYKLSVKQNFPQVAQLEDTHKRSVRAVSFKPPLPGVESNFLDLPALASGSFDSTISIWGIDEPETEILSSPRNEWNLMAIIEGHENEIKAVGWNHNGSLLASCSRDKTVWIWETDPETLEEFECISVLNDHQHDIKHVVWHPHQNLLASSSYDDTIRLYKQDLDDDDWSCVGVLNGHEGTVWCSQFEDNHRHQESNESSNRSKIRLVSVSDDMTARIWSKYIPSSIKHKSEMVWEQESILPPVHQYPIYSVAWSAQSGKIATVGSDGKIVIYIEGDDNSWSIDSVKESAHGVHEINSIIWALLDDQSEVLVTAGDDGCVNIWKP.

7 WD repeats span residues alanine 10 to glutamine 49, threonine 56 to leucine 105, glycine 120 to glutamate 160, aspartate 167 to serine 206, glycine 213 to histidine 265, valine 280 to isoleucine 319, and histidine 327 to proline 361.

The protein belongs to the WD repeat CIA1 family. In terms of assembly, interacts with NAR1.

Its subcellular location is the cytoplasm. The protein localises to the nucleus. Its function is as follows. Essential component of the cytosolic iron-sulfur (Fe/S) protein assembly machinery. Required for the maturation of extramitochondrial Fe/S proteins. The sequence is that of Probable cytosolic iron-sulfur protein assembly protein 1 from Scheffersomyces stipitis (strain ATCC 58785 / CBS 6054 / NBRC 10063 / NRRL Y-11545) (Yeast).